The chain runs to 538 residues: Atos homolog protein B (538 aa).

Composition is skewed to polar residues over residues 1–12 (MRHVQAETSPSS) and 129–141 (GGSS…SGAR). 3 disordered regions span residues 1 to 98 (MRHV…EPPT), 129 to 185 (GGSS…QLHT), and 201 to 303 (LVSG…PTDC). Residues 227–238 (HTPPGPGPPGPC) are compositionally biased toward pro residues. Phosphoserine is present on residues Ser254 and Ser255. The tract at residues 348–430 (LLGNFEESLL…VPKVGTIQVT (83 aa)) is required for macropage invasion. Residues 436–444 (QTVVKMFLV) form a transactivation domain 1 (TAD1) region.

This sequence belongs to the ATOS family.

The protein localises to the nucleus. Transcription regulator that may syncronize transcriptional and translational programs. The protein is Atos homolog protein B of Bos taurus (Bovine).